The chain runs to 1083 residues: Ubiquitin carboxyl-terminal hydrolase 28 (1083 aa).

A disordered region spans residues aspartate 60 to alanine 82. Serine 67 is modified (phosphoserine). The UIM domain occupies aspartate 97 to isoleucine 116. Lysine 99 participates in a covalent cross-link: Glycyl lysine isopeptide (Lys-Gly) (interchain with G-Cter in SUMO2). Residues valine 162–aspartate 656 enclose the USP domain. The active-site Nucleophile is the cysteine 171. Serine 376 bears the Phosphoserine mark. The segment at aspartate 483–valine 539 is disordered. A compositionally biased stretch (polar residues) spans lysine 487–serine 505. At serine 556 the chain carries Phosphoserine. The active-site Proton acceptor is histidine 606. The interval glutamate 703 to glutamate 728 is disordered. The segment covering serine 714 to glutamate 728 has biased composition (low complexity). Serine 720 carries the post-translational modification Phosphoserine. Threonine 1054 is modified (phosphothreonine).

It belongs to the peptidase C19 family. USP28 subfamily. Interacts with ZNF304. Interacts with PRKD1. Interacts with TP53BP1. Interacts with FBXW7; following DNA damage, dissociates from FBXW7 leading to degradation of MYC. Degraded upon nickel ion level or hypoxia exposure. In terms of processing, phosphorylated upon DNA damage at Ser-67 and Ser-720, by ATM or ATR. Phosphorylated by PRKD1.

It localises to the nucleus. It is found in the nucleoplasm. It carries out the reaction Thiol-dependent hydrolysis of ester, thioester, amide, peptide and isopeptide bonds formed by the C-terminal Gly of ubiquitin (a 76-residue protein attached to proteins as an intracellular targeting signal).. In terms of biological role, deubiquitinase involved in DNA damage response checkpoint and MYC proto-oncogene stability. Involved in DNA damage induced apoptosis by specifically deubiquitinating proteins of the DNA damage pathway such as CLSPN. Also involved in G2 DNA damage checkpoint, by deubiquitinating CLSPN, and preventing its degradation by the anaphase promoting complex/cyclosome (APC/C). In contrast, it does not deubiquitinate PLK1. Specifically deubiquitinates MYC in the nucleoplasm, leading to prevent MYC degradation by the proteasome: acts by specifically interacting with FBXW7 (FBW7alpha) in the nucleoplasm and counteracting ubiquitination of MYC by the SCF(FBXW7) complex. Deubiquitinates ZNF304, hence preventing ZNF304 degradation by the proteasome and leading to the activated KRAS-mediated promoter hypermethylation and transcriptional silencing of tumor suppressor genes (TSGs) in a subset of colorectal cancers (CRC) cells. The protein is Ubiquitin carboxyl-terminal hydrolase 28 (Usp28) of Rattus norvegicus (Rat).